A 44-amino-acid chain; its full sequence is Photosystem I reaction center subunit IX (44 aa).

A helical membrane pass occupies residues 7-27 (YLSVAPVLSTLWFASLAGLLI).

Belongs to the PsaJ family.

The protein resides in the plastid. It is found in the chloroplast thylakoid membrane. Functionally, may help in the organization of the PsaE and PsaF subunits. The chain is Photosystem I reaction center subunit IX from Barbarea verna (Land cress).